The chain runs to 764 residues: Sesterfisherol synthase (764 aa).

The interval 2 to 331 is terpene cyclase; the sequence is EVWEHSRPIA…SPRHHAWRNN (330 aa). Asp95 is a Mg(2+) binding site. Substrate is bound by residues Asp95, 187–190, Asn231, 235–239, and 324–325; these read RRDD, SFDRE, and RH. The DDXXD 1 signature appears at 95 to 99; that stretch reads DDGYE. An NSE/DTE motif is present at residues 231–239; sequence NDYWSFDRE. Residues 332-759 are prenyltransferase; sequence SRNGLKPANH…PMLRLLLEKL (428 aa). Residues 347–372 form a disordered region; sequence LITPSNNLNSSKGSEEQMQDSDNGTR. Polar residues predominate over residues 348 to 358; the sequence is ITPSNNLNSSK. Lys476, Arg479, and His508 together coordinate isopentenyl diphosphate. Residues Asp515 and Asp519 each contribute to the Mg(2+) site. The DDXXD 2 motif lies at 515 to 519; sequence DDIED. A dimethylallyl diphosphate-binding site is contributed by Arg524. Arg525 serves as a coordination point for isopentenyl diphosphate. Dimethylallyl diphosphate contacts are provided by Lys602, Thr603, Gln638, Asn645, Lys655, and Lys665.

The protein in the N-terminal section; belongs to the terpene synthase family. In the C-terminal section; belongs to the FPP/GGPP synthase family. Hexamer. Requires Mg(2+) as cofactor.

It carries out the reaction isopentenyl diphosphate + (2E,6E)-farnesyl diphosphate = (2E,6E,10E)-geranylgeranyl diphosphate + diphosphate. The catalysed reaction is isopentenyl diphosphate + (2E,6E,10E)-geranylgeranyl diphosphate = (2E,6E,10E,14E)-geranylfarnesyl diphosphate + diphosphate. The enzyme catalyses (2E,6E,10E,14E)-geranylfarnesyl diphosphate + H2O = sesterfisherol + diphosphate. It participates in secondary metabolite biosynthesis; terpenoid biosynthesis. Bifunctional terpene synthase; part of the gene cluster that mediates the biosynthesis of sesterfisheric acid. The bifunctional terpene synthase NfSS converts dimethylallyl diphosphate (DMAPP) and isopentenyl diphosphate (IPP) into sesterfisherol. The C-terminal prenyltransferase (PT) domain of NfSS catalyzes formation of geranylfarnesyl pyrophosphate (GFPP), whereas the N-terminal terpene cyclase (TC) domain catalyzes the cyclization of GFPP to sesterfisherol. The cytochrome P450 monooxygenase NfP450 then catalyzes oxidative modifications of sesterfisherol into sesterfisheric acid. The polypeptide is Sesterfisherol synthase (Neosartorya fischeri (strain ATCC 1020 / DSM 3700 / CBS 544.65 / FGSC A1164 / JCM 1740 / NRRL 181 / WB 181) (Aspergillus fischerianus)).